The following is a 117-amino-acid chain: Ribulose bisphosphate carboxylase small subunit 1 (117 aa).

Belongs to the RuBisCO small chain family. Heterohexadecamer of 8 large and 8 small subunits.

In terms of biological role, ruBisCO catalyzes two reactions: the carboxylation of D-ribulose 1,5-bisphosphate, the primary event in carbon dioxide fixation, as well as the oxidative fragmentation of the pentose substrate. Both reactions occur simultaneously and in competition at the same active site. Although the small subunit is not catalytic it is essential for maximal activity. This is Ribulose bisphosphate carboxylase small subunit 1 from Hydrogenovibrio marinus.